Here is a 230-residue protein sequence, read N- to C-terminus: Cytidylate kinase (230 aa).

Residue 12–20 (GPSGAGKGT) participates in ATP binding.

It belongs to the cytidylate kinase family. Type 1 subfamily.

It localises to the cytoplasm. The enzyme catalyses CMP + ATP = CDP + ADP. It catalyses the reaction dCMP + ATP = dCDP + ADP. In Shewanella halifaxensis (strain HAW-EB4), this protein is Cytidylate kinase.